Here is a 424-residue protein sequence, read N- to C-terminus: Transcription regulator spe-44 (424 aa).

The SAND domain occupies 65–150 (PLQITIPEGD…RTHMEAMTID (86 aa)). Disordered stretches follow at residues 178 to 228 (ARKS…KPRQ) and 371 to 394 (EHSV…AREF). The segment covering 192-210 (YEIENEMAGKEADNDDNRK) has biased composition (basic and acidic residues). Residues 378-388 (PRTSSSSQESL) are compositionally biased toward polar residues.

The protein resides in the chromosome. Its subcellular location is the nucleus. Transcription factor which controls spermatogenesis and sperm cell fate by regulation of sperm gene expression. The chain is Transcription regulator spe-44 from Caenorhabditis elegans.